Consider the following 720-residue polypeptide: 1-deoxy-D-xylulose-5-phosphate synthase 1, chloroplastic (720 aa).

A chloroplast-targeting transit peptide spans 1 to 51 (MALTTFSISRGGFVGALPQEGHFAPAAAELSLHKLQSRPHKARRRSSSSIS). Basic residues predominate over residues 35–46 (LQSRPHKARRRS). The interval 35 to 74 (LQSRPHKARRRSSSSISASLSTEREAAEYHSQRPPTPLLD) is disordered. Residues 56-65 (TEREAAEYHS) show a composition bias toward basic and acidic residues. Thiamine diphosphate-binding positions include histidine 142 and 183-185 (GHS). Aspartate 214 is a binding site for Mg(2+). Thiamine diphosphate contacts are provided by residues 215-216 (GA), asparagine 243, tyrosine 364, and glutamate 446. Asparagine 243 contacts Mg(2+).

The protein belongs to the transketolase family. DXPS subfamily. Homodimer. Mg(2+) serves as cofactor. The cofactor is thiamine diphosphate.

It is found in the plastid. The protein resides in the chloroplast stroma. It carries out the reaction D-glyceraldehyde 3-phosphate + pyruvate + H(+) = 1-deoxy-D-xylulose 5-phosphate + CO2. It functions in the pathway metabolic intermediate biosynthesis; 1-deoxy-D-xylulose 5-phosphate biosynthesis; 1-deoxy-D-xylulose 5-phosphate from D-glyceraldehyde 3-phosphate and pyruvate: step 1/1. In terms of biological role, catalyzes the acyloin condensation reaction between C atoms 2 and 3 of pyruvate and glyceraldehyde 3-phosphate to yield 1-deoxy-D-xylulose-5-phosphate (DXP). Is a limiting enzyme for plastidic isoprenoid biosynthesis and essential for chloroplast development. In Oryza sativa subsp. japonica (Rice), this protein is 1-deoxy-D-xylulose-5-phosphate synthase 1, chloroplastic (CLA1).